We begin with the raw amino-acid sequence, 713 residues long: DNA polymerase eta (713 aa).

A UmuC domain is found at 9–259 (VALVDMDCFF…MPIRKIRSLG (251 aa)). Mg(2+)-binding residues include D13 and M14. The Mn(2+) site is built by D13 and M14. Residue R61 coordinates a 2'-deoxyribonucleoside 5'-triphosphate. D115 and E116 together coordinate Mg(2+). The Mn(2+) site is built by D115 and E116. Disordered stretches follow at residues 441 to 472 (TSFL…AVTA) and 495 to 527 (EASL…QSTG). Polar residues-rich tracts occupy residues 456–466 (VTSSEAKTQGS) and 497–527 (SLSS…QSTG). A UBZ3-type zinc finger spans residues 628–662 (AAEDQVPCEKCGSLVPVWDMPEHMDYHFALELQKS). Zn(2+)-binding residues include C635, C638, H650, and H654. A disordered region spans residues 677-705 (VSHQGKRNPKSPLACTNKRPRPEGMQTLE). Glycyl lysine isopeptide (Lys-Gly) (interchain with G-Cter in ubiquitin) cross-links involve residues K682, K686, and K694. The PIP-box signature appears at 701 to 708 (MQTLESFF). Residue K709 forms a Glycyl lysine isopeptide (Lys-Gly) (interchain with G-Cter in ubiquitin) linkage.

This sequence belongs to the DNA polymerase type-Y family. In terms of assembly, interacts with REV1. Interacts with monoubiquitinated PCNA, but not unmodified PCNA. Interacts with POLI; this interaction targets POLI to the replication machinery. Interacts with PALB2 and BRCA2; the interactions are direct and are required to sustain the recruitment of POLH at blocked replication forks and to stimulate POLH-dependent DNA synthesis on D loop substrates. Interacts (via C-terminus) with TRAIP. Interacts with ubiquitin. Interacts with POLDIP2. Requires Mg(2+) as cofactor. It depends on Mn(2+) as a cofactor. Monoubiquitinated by RCHY1/PIRH2. Ubiquitination depends on integrity of the UBZ3-type zinc finger domain and is enhanced by TRAIP. Ubiquitination inhibits the ability of PolH to interact with PCNA and to bypass UV-induced lesions.

It localises to the nucleus. It catalyses the reaction DNA(n) + a 2'-deoxyribonucleoside 5'-triphosphate = DNA(n+1) + diphosphate. Its activity is regulated as follows. The enzyme in complex with the DNA substrate binds a third divalent metal cation. The binding of this third divalent cation, which is coordinated by water molecules and two oxygen atoms from DNA and dNTP, is essential for catalyzing the DNA synthesis. In terms of biological role, DNA polymerase specifically involved in the DNA repair by translesion synthesis (TLS). Due to low processivity on both damaged and normal DNA, cooperates with the heterotetrameric (REV3L, REV7, POLD2 and POLD3) POLZ complex for complete bypass of DNA lesions. Inserts one or 2 nucleotide(s) opposite the lesion, the primer is further extended by the tetrameric POLZ complex. In the case of 1,2-intrastrand d(GpG)-cisplatin cross-link, inserts dCTP opposite the 3' guanine. Particularly important for the repair of UV-induced pyrimidine dimers. Although inserts the correct base, may cause base transitions and transversions depending upon the context. May play a role in hypermutation at immunoglobulin genes. Forms a Schiff base with 5'-deoxyribose phosphate at abasic sites, but does not have any lyase activity, preventing the release of the 5'-deoxyribose phosphate (5'-dRP) residue. This covalent trapping of the enzyme by the 5'-dRP residue inhibits its DNA synthetic activity during base excision repair, thereby avoiding high incidence of mutagenesis. Targets POLI to replication foci. The chain is DNA polymerase eta (POLH) from Homo sapiens (Human).